A 514-amino-acid polypeptide reads, in one-letter code: ATP synthase subunit alpha (514 aa).

170–177 (GDRQTGKT) provides a ligand contact to ATP.

The protein belongs to the ATPase alpha/beta chains family. In terms of assembly, F-type ATPases have 2 components, CF(1) - the catalytic core - and CF(0) - the membrane proton channel. CF(1) has five subunits: alpha(3), beta(3), gamma(1), delta(1), epsilon(1). CF(0) has three main subunits: a(1), b(2) and c(9-12). The alpha and beta chains form an alternating ring which encloses part of the gamma chain. CF(1) is attached to CF(0) by a central stalk formed by the gamma and epsilon chains, while a peripheral stalk is formed by the delta and b chains.

It is found in the cell inner membrane. It catalyses the reaction ATP + H2O + 4 H(+)(in) = ADP + phosphate + 5 H(+)(out). Its function is as follows. Produces ATP from ADP in the presence of a proton gradient across the membrane. The alpha chain is a regulatory subunit. The sequence is that of ATP synthase subunit alpha from Acinetobacter baumannii (strain AB307-0294).